Here is a 247-residue protein sequence, read N- to C-terminus: Cell division protein ZapD (247 aa).

This sequence belongs to the ZapD family. As to quaternary structure, interacts with FtsZ.

The protein resides in the cytoplasm. Functionally, cell division factor that enhances FtsZ-ring assembly. Directly interacts with FtsZ and promotes bundling of FtsZ protofilaments, with a reduction in FtsZ GTPase activity. The chain is Cell division protein ZapD from Shigella dysenteriae serotype 1 (strain Sd197).